We begin with the raw amino-acid sequence, 301 residues long: MVVTVRAPATSANLGSGFDVFGVALSKPADVVRVERADTTTITVTGAGAQYVPTDPQENTAGVVAAALDAPATIHINKGVRPSSGLGSSAASAAAATVALAELYDRPLDDDALVRAAAQGEAAASGVAHADNVAPAILGGFTIVREDGIEHVDASLALAVCLPETTVSTRDARGVVPESAAMEAVVSTVESAATLTLGMCENDPQRVGRGVEDALVTPARARLMDGYEAASAAARDAGATGVTISGSGPGVVAVCRRRDRKRVAAALVDGFDSAGVAASAYQTRIGDGATRLAADGDDRAP.

An ATP-binding site is contributed by 81-91 (RPSSGLGSSAA).

This sequence belongs to the GHMP kinase family. Homoserine kinase subfamily.

It is found in the cytoplasm. The catalysed reaction is L-homoserine + ATP = O-phospho-L-homoserine + ADP + H(+). It participates in amino-acid biosynthesis; L-threonine biosynthesis; L-threonine from L-aspartate: step 4/5. Functionally, catalyzes the ATP-dependent phosphorylation of L-homoserine to L-homoserine phosphate. The sequence is that of Homoserine kinase from Halobacterium salinarum (strain ATCC 29341 / DSM 671 / R1).